The chain runs to 1342 residues: Zinc finger protein 335 (1342 aa).

Disordered stretches follow at residues 1–102 (MEEN…VTGG) and 201–228 (TSTS…AEEP). Positions 34–49 (AVSADSSDAAAAPGQA) are enriched in low complexity. Residues 201–217 (TSTSTCLEAQGGPSSPV) are compositionally biased toward polar residues. The segment at 245-268 (FKCKMCQYRSSTKATLLRHMRERH) adopts a C2H2-type 1 zinc-finger fold. A disordered region spans residues 274-442 (AAAAAAGKKG…TLPRRRGRPS (169 aa)). The span at 297–327 (EEGPEEEDDDDIVDAGAIDDLEEDSDYNPAE) shows a compositional bias: acidic residues. Residues 346–357 (RPRRRPGRPRKL) show a composition bias toward basic residues. 8 C2H2-type zinc fingers span residues 465-487 (FLCR…VNSH), 495-517 (FKCL…MFNH), 523-545 (YKCD…AAVH), 562-584 (FPCP…MKTH), 590-612 (HMCD…LLTH), 621-643 (FKCE…QLSH), 649-672 (FKCS…AVKH), and 678-701 (FACE…RCRH). Disordered regions lie at residues 732 to 763 (LKQQ…QSSE) and 964 to 1013 (CGGL…SAAT). Residues 740-753 (PGPPPSSPGPPEIP) show a composition bias toward pro residues. Phosphoserine occurs at positions 976, 992, and 1007. The segment covering 986 to 997 (SQSSASSPPATS) has biased composition (low complexity). C2H2-type zinc fingers lie at residues 1019–1041 (FSCK…KRAH), 1047–1069 (FKCP…MAQH), 1075–1097 (HQCS…MLTH), and 1103–1126 (FACH…QRLH). K1022 is covalently cross-linked (Glycyl lysine isopeptide (Lys-Gly) (interchain with G-Cter in SUMO2)). An involved in the interaction with CCAR2 region spans residues 1041-1342 (HAGPGAFKCP…EYDVITLADD (302 aa)). S1153 carries the phosphoserine modification.

This sequence belongs to the krueppel C2H2-type zinc-finger protein family. As to quaternary structure, interacts with NCOA6; may enhance ligand-dependent transcriptional activation by nuclear hormone receptors. Interacts with CNOT6. Interacts with CNOT9; the interaction is direct. Component of a nuclear receptor-mediated transcription complex composed of at least ZNF335, CCAR2 and EMSY; the complex stimulates the transcription of nuclear receptor target genes such as SOX9 and HOXA1. Within the complex interacts with EMSY and interacts (via C-terminus) with CCAR2. Interacts with members of histone H3'Lys4'(H3K4) methyltransferase complexes ASH2L, CXXC1, KMT2A/MLL1, RBBP5, SETD1A and WDR5. Component of a histone methylation complex composed of at least ZNF335, RBBP5, ASH2L and WDR5; the complex may have histone H3-specific methyltransferase activity, however does not have specificity for 'Lys-4' of histone H3. Interacts with RBBP5 and WDR5. Interacts with ASHL2. Components of this complex may associate with components of the ZNF335-CCAR2-EMSY nuclear receptor-mediated transcription complex to form a complex at least composed of ZNF335, HCFC1, CCAR2, EMSY, MKI67, RBBP5, ASH2L and WDR5. Within this complex also interacts with HCFC1 and MKI67. Ubiquitously expressed.

The protein resides in the nucleus. Component or associated component of some histone methyltransferase complexes may regulate transcription through recruitment of those complexes on gene promoters. Enhances ligand-dependent transcriptional activation by nuclear hormone receptors. Plays an important role in neural progenitor cell proliferation and self-renewal through the regulation of specific genes involved brain development, including REST. Also controls the expression of genes involved in somatic development and regulates, for instance, lymphoblast proliferation. The polypeptide is Zinc finger protein 335 (ZNF335) (Homo sapiens (Human)).